A 371-amino-acid polypeptide reads, in one-letter code: Monomethylxanthine methyltransferase 2 (371 aa).

8 residues coordinate S-adenosyl-L-homocysteine: Tyr18, Cys61, Asn66, Asp100, Leu101, Ser139, Phe140, and Cys156. Theobromine is bound by residues Tyr157, His160, and Trp161. Mg(2+) is bound by residues Asn178, Asp260, Phe262, and Asn263. Tyr355 serves as a coordination point for theobromine.

It belongs to the methyltransferase superfamily. Type-7 methyltransferase family. The cofactor is Mg(2+).

The enzyme catalyses 7-methylxanthine + S-adenosyl-L-methionine = theobromine + S-adenosyl-L-homocysteine + H(+). Its pathway is alkaloid biosynthesis. In terms of biological role, involved in the biosynthesis of caffeine. Catalyzes the conversion of 7-methylxanthine (7mX) to theobromine and with a lower activity of paraxanthine to caffeine. The protein is Monomethylxanthine methyltransferase 2 of Coffea canephora (Robusta coffee).